We begin with the raw amino-acid sequence, 312 residues long: Ribosomal RNA small subunit methyltransferase H (312 aa).

S-adenosyl-L-methionine contacts are provided by residues A32–H34, D52, F79, D100, and Q107.

It belongs to the methyltransferase superfamily. RsmH family.

It is found in the cytoplasm. The enzyme catalyses cytidine(1402) in 16S rRNA + S-adenosyl-L-methionine = N(4)-methylcytidine(1402) in 16S rRNA + S-adenosyl-L-homocysteine + H(+). In terms of biological role, specifically methylates the N4 position of cytidine in position 1402 (C1402) of 16S rRNA. This chain is Ribosomal RNA small subunit methyltransferase H, found in Listeria monocytogenes serotype 4b (strain CLIP80459).